We begin with the raw amino-acid sequence, 134 residues long: Interleukin-5 (134 aa).

Positions 1–19 are cleaved as a signal peptide; that stretch reads MRMLLHLSLLALGAAYVYA. The O-linked (GalNAc...) threonine glycan is linked to T22. An N-linked (GlcNAc...) asparagine glycan is attached at N47.

This sequence belongs to the IL-5 family. In terms of assembly, homodimer; disulfide-linked. Interacts with IL5RA. Interacts with CSF2RB. As to expression, present in peripheral blood mononuclear cells.

Its subcellular location is the secreted. Homodimeric cytokine expressed predominantly by T-lymphocytes and NK cells that plays an important role in the survival, differentiation, and chemotaxis of eosinophils. Also acts on activated and resting B-cells to induce immunoglobulin production, growth, and differentiation. Mechanistically, exerts its biological effects through a receptor composed of IL5RA subunit and the cytokine receptor common subunit beta/CSF2RB. Binding to the receptor leads to activation of various kinases including LYN, SYK and JAK2 and thereby propagates signals through the RAS-MAPK and JAK-STAT5 pathways respectively. The sequence is that of Interleukin-5 (IL5) from Homo sapiens (Human).